We begin with the raw amino-acid sequence, 507 residues long: Desmethyl-deoxy-podophyllotoxin synthase (507 aa).

The helical transmembrane segment at 1 to 21 (MEFLSFPLSSALLIILLFMLV) threads the bilayer. Residue C440 participates in heme binding.

Belongs to the cytochrome P450 family. The cofactor is heme. As to expression, rhizome-specific expression.

The protein localises to the membrane. It catalyses the reaction (-)-deoxypodophyllotoxin + reduced [NADPH--hemoprotein reductase] + O2 = (-)-4'-desmethyl-deoxypodophyllotoxin + formaldehyde + oxidized [NADPH--hemoprotein reductase] + H2O + H(+). It participates in aromatic compound metabolism; phenylpropanoid biosynthesis. Cytochrome P450 involved in the biosynthesis of etoposide, a chemotherapeutic compound of the topoisomerase inhibitor family. Catalyzes the conversion of deoxypodophyllotoxin to desmethyl-deoxypodophyllotoxin. This chain is Desmethyl-deoxy-podophyllotoxin synthase, found in Sinopodophyllum hexandrum (Himalayan may apple).